The chain runs to 456 residues: uncharacterized protein (456 aa).

Positions 3-61 (TIKKNEVKTGKVIDLTHEGHGVVKVDRYPIFIPNALIDEEIKFKLIKVKKNFAIGKLIE) constitute a TRAM domain. The [4Fe-4S] cluster site is built by cysteine 74, cysteine 80, cysteine 83, and cysteine 162. 4 residues coordinate S-adenosyl-L-methionine: glutamine 286, tyrosine 315, glutamate 336, and aspartate 384. The Nucleophile role is filled by cysteine 411.

The protein belongs to the class I-like SAM-binding methyltransferase superfamily. RNA M5U methyltransferase family.

This is an uncharacterized protein from Staphylococcus epidermidis (strain ATCC 35984 / DSM 28319 / BCRC 17069 / CCUG 31568 / BM 3577 / RP62A).